A 342-amino-acid polypeptide reads, in one-letter code: MTTLTITRPDDWHVHLRDGEVLADTVRDISRYNGRALIMPNTVPPVTTTEMALAYRDRIQAHNQTEQFSPLMSLYLTDNTTADEVRKAKASGAVVAAKLYPAGATTNSDSGVTDVKKIYPVLQAMQEVGMLLLVHGEVTTHDVDIFDREKTFLDNVLAPIVQDFPDLKIVLEHITTSDAVVFVKNANENVAATITAHHLLYNRNHMLVGGIKPHFYCLPILKRNTHQLALISAATSGNKKFFLGTDSAPHAKGAKESACGCAGSYTAHAALELYAEVFEQAGKLENLEAFASHNGPDFYGLPRNQDTITLVKDAWPVPASMPFGGDIVVPIRAGENMEWKVK.

His13 and His15 together coordinate Zn(2+). Substrate-binding positions include His15–Arg17 and Asn41. 3 residues coordinate Zn(2+): Lys98, His135, and His173. Lys98 is subject to N6-carboxylysine. Position 135 (His135) interacts with substrate. Leu218 contacts substrate. Zn(2+) is bound at residue Asp246. The active site involves Asp246. 2 residues coordinate substrate: His250 and Ala262.

The protein belongs to the metallo-dependent hydrolases superfamily. DHOase family. Class II DHOase subfamily. As to quaternary structure, homodimer. The cofactor is Zn(2+).

The catalysed reaction is (S)-dihydroorotate + H2O = N-carbamoyl-L-aspartate + H(+). It functions in the pathway pyrimidine metabolism; UMP biosynthesis via de novo pathway; (S)-dihydroorotate from bicarbonate: step 3/3. Its function is as follows. Catalyzes the reversible cyclization of carbamoyl aspartate to dihydroorotate. The polypeptide is Dihydroorotase (Vibrio vulnificus (strain YJ016)).